Consider the following 111-residue polypeptide: UPF0060 membrane protein Ajs_1473 (111 aa).

The next 4 membrane-spanning stretches (helical) occupy residues 8–28 (ILFA…WLVV), 33–53 (SAWL…LLTL), 65–85 (YGGM…GVAL), and 88–108 (WDFV…LQPA).

The protein belongs to the UPF0060 family.

It localises to the cell inner membrane. The chain is UPF0060 membrane protein Ajs_1473 from Acidovorax sp. (strain JS42).